Consider the following 87-residue polypeptide: ParB-like nuclease domain-containing protein YnaK (87 aa).

The sequence is that of ParB-like nuclease domain-containing protein YnaK (ynaK) from Escherichia coli (strain K12).